A 475-amino-acid polypeptide reads, in one-letter code: Ankyrin repeat, SAM and basic leucine zipper domain-containing protein 1 (475 aa).

The segment covering 1–10 (MAAGALRGLA) has biased composition (low complexity). The segment at 1-23 (MAAGALRGLAVAGGGESSESEDD) is disordered. 3 positions are modified to phosphoserine: S17, S18, and S20. 6 ANK repeats span residues 45–74 (EKNETFKKALTTGDISLVQELLDSGISVDS), 78–107 (YGWTPLMYAASVANVELVRVLLDRGANASF), 110–144 (DKQTILITACSARGLEEQILKCVELLLSRNADPNV), 148–177 (RLMTPIMYAARDGHPQVVALLVAHGAEVNT), 181–210 (NGYTALTWAARQGHKNVVLKLLELGANKML), and 214–243 (DGKIPSEIAKRNKHLEIFNFLSLTLNPLEG). Residues 272–334 (SYTAFGDLEI…KILSALKELE (63 aa)) form the SAM domain.

In terms of assembly, interacts with DDX4, PIWIL1, RANBP9 and TDRD1.

The protein resides in the cytoplasm. Plays a central role during spermatogenesis by repressing transposable elements and preventing their mobilization, which is essential for the germline integrity. Acts via the piRNA metabolic process, which mediates the repression of transposable elements during meiosis by forming complexes composed of piRNAs and Piwi proteins and governs the methylation and subsequent repression of transposons. Its association with pi-bodies suggests a participation in the primary piRNAs metabolic process. Required prior to the pachytene stage to facilitate the production of multiple types of piRNAs, including those associated with repeats involved in the regulation of retrotransposons. May act by mediating protein-protein interactions during germ cell maturation. This Otolemur garnettii (Small-eared galago) protein is Ankyrin repeat, SAM and basic leucine zipper domain-containing protein 1 (ASZ1).